We begin with the raw amino-acid sequence, 605 residues long: DNA primase (605 aa).

Residues 39 to 63 form a CHC2-type zinc finger; it reads CPFHHERTPSFHVVPDKKMYYCFGC. In terms of domain architecture, Toprim spans 257-338; it reads RAAIICEGYM…EVRIVELNGG (82 aa). Mg(2+)-binding residues include glutamate 263, aspartate 307, and aspartate 309.

This sequence belongs to the DnaG primase family. As to quaternary structure, monomer. Interacts with DnaB. Zn(2+) serves as cofactor. The cofactor is Mg(2+).

It catalyses the reaction ssDNA + n NTP = ssDNA/pppN(pN)n-1 hybrid + (n-1) diphosphate.. Functionally, RNA polymerase that catalyzes the synthesis of short RNA molecules used as primers for DNA polymerase during DNA replication. This chain is DNA primase, found in Treponema pallidum (strain Nichols).